The sequence spans 157 residues: Protein Smg (157 aa).

Belongs to the Smg family.

The polypeptide is Protein Smg (Buchnera aphidicola subsp. Schizaphis graminum (strain Sg)).